Here is a 356-residue protein sequence, read N- to C-terminus: UDP-N-acetylglucosamine--N-acetylmuramyl-(pentapeptide) pyrophosphoryl-undecaprenol N-acetylglucosamine transferase (356 aa).

UDP-N-acetyl-alpha-D-glucosamine is bound by residues serine 198 and glutamine 289.

Belongs to the glycosyltransferase 28 family. MurG subfamily.

It is found in the cell membrane. It carries out the reaction Mur2Ac(oyl-L-Ala-gamma-D-Glu-L-Lys-D-Ala-D-Ala)-di-trans,octa-cis-undecaprenyl diphosphate + UDP-N-acetyl-alpha-D-glucosamine = beta-D-GlcNAc-(1-&gt;4)-Mur2Ac(oyl-L-Ala-gamma-D-Glu-L-Lys-D-Ala-D-Ala)-di-trans,octa-cis-undecaprenyl diphosphate + UDP + H(+). It participates in cell wall biogenesis; peptidoglycan biosynthesis. In terms of biological role, cell wall formation. Catalyzes the transfer of a GlcNAc subunit on undecaprenyl-pyrophosphoryl-MurNAc-pentapeptide (lipid intermediate I) to form undecaprenyl-pyrophosphoryl-MurNAc-(pentapeptide)GlcNAc (lipid intermediate II). This Streptococcus thermophilus (strain CNRZ 1066) protein is UDP-N-acetylglucosamine--N-acetylmuramyl-(pentapeptide) pyrophosphoryl-undecaprenol N-acetylglucosamine transferase.